Here is a 445-residue protein sequence, read N- to C-terminus: 2-oxoisovalerate dehydrogenase subunit alpha, mitochondrial (445 aa).

The N-terminal 45 residues, 1-45 (MAVAIAAARVWRPNRGLSQAALLLLWRPGARGLARSHPHRQQQQF), are a transit peptide targeting the mitochondrion. Tyrosine 158 and arginine 159 together coordinate thiamine diphosphate. Serine 206 is a K(+) binding site. Serine 207 is a binding site for thiamine diphosphate. K(+) contacts are provided by proline 208, threonine 211, and glutamine 212. Glutamate 238 contributes to the Mg(2+) binding site. Thiamine diphosphate-binding residues include glycine 239, alanine 240, and arginine 265. Mg(2+) is bound by residues asparagine 267 and tyrosine 269. Residue histidine 336 participates in thiamine diphosphate binding. A Phosphoserine; by BCKDK modification is found at serine 337. Residue threonine 338 is modified to Phosphothreonine. Phosphoserine is present on residues serine 339 and serine 347. Position 356 is an N6-acetyllysine; alternate (lysine 356). At lysine 356 the chain carries N6-succinyllysine; alternate. N6-succinyllysine is present on lysine 380.

It belongs to the BCKDHA family. As to quaternary structure, heterotetramer of 2 alpha/BCKDHA and 2 beta chains/BCKDHB that forms the branched-chain alpha-keto acid decarboxylase (E1) component of the BCKD complex. The branched-chain alpha-ketoacid dehydrogenase is a large complex composed of three major building blocks E1, E2 and E3. It is organized around E2, a 24-meric cubic core composed of DBT, to which are associated 6 to 12 copies of E1, and approximately 6 copies of the dehydrogenase E3, a DLD dimer. Interacts with PPM1K. The cofactor is thiamine diphosphate. Mg(2+) is required as a cofactor. Post-translationally, phosphorylated at Ser-337 by BCKDK and dephosphorylated by protein phosphatase PPM1K.

It localises to the mitochondrion matrix. It catalyses the reaction N(6)-[(R)-lipoyl]-L-lysyl-[protein] + 3-methyl-2-oxobutanoate + H(+) = N(6)-[(R)-S(8)-2-methylpropanoyldihydrolipoyl]-L-lysyl-[protein] + CO2. Together with BCKDHB forms the heterotetrameric E1 subunit of the mitochondrial branched-chain alpha-ketoacid dehydrogenase (BCKD) complex. The BCKD complex catalyzes the multi-step oxidative decarboxylation of alpha-ketoacids derived from the branched-chain amino-acids valine, leucine and isoleucine producing CO2 and acyl-CoA which is subsequently utilized to produce energy. The E1 subunit catalyzes the first step with the decarboxylation of the alpha-ketoacid forming an enzyme-product intermediate. A reductive acylation mediated by the lipoylamide cofactor of E2 extracts the acyl group from the E1 active site for the next step of the reaction. The sequence is that of 2-oxoisovalerate dehydrogenase subunit alpha, mitochondrial (BCKDHA) from Macaca fascicularis (Crab-eating macaque).